The chain runs to 409 residues: Endoglucanase B (409 aa).

Residues histidine 61, 65–66, tyrosine 92, and histidine 127 each bind substrate; that span reads WY. Residue glutamate 165 is the Proton donor of the active site. Tyrosine 228 is a substrate binding site. The active-site Nucleophile is the glutamate 254. Residues 260-261, tryptophan 288, and 293-295 contribute to the substrate site; these read AT and KDE. Positions 326–372 are disordered; the sequence is IRESATTPPSDPTPPSDPDPGEPEPDPGEPDPTPPSDPGDYPAWDPN. Pro residues predominate over residues 334–343; sequence PSDPTPPSDP. A compositionally biased stretch (acidic residues) spans 344-354; sequence DPGEPEPDPGE.

It belongs to the glycosyl hydrolase 5 (cellulase A) family.

The enzyme catalyses Endohydrolysis of (1-&gt;4)-beta-D-glucosidic linkages in cellulose, lichenin and cereal beta-D-glucans.. In Evansella cellulosilytica (strain ATCC 21833 / DSM 2522 / FERM P-1141 / JCM 9156 / N-4) (Bacillus cellulosilyticus), this protein is Endoglucanase B (celB).